Consider the following 277-residue polypeptide: Bifunctional protein FolD (277 aa).

NADP(+) contacts are provided by residues 164–166, serine 189, and threonine 230; that span reads GRS.

The protein belongs to the tetrahydrofolate dehydrogenase/cyclohydrolase family. Homodimer.

The catalysed reaction is (6R)-5,10-methylene-5,6,7,8-tetrahydrofolate + NADP(+) = (6R)-5,10-methenyltetrahydrofolate + NADPH. It catalyses the reaction (6R)-5,10-methenyltetrahydrofolate + H2O = (6R)-10-formyltetrahydrofolate + H(+). The protein operates within one-carbon metabolism; tetrahydrofolate interconversion. Its function is as follows. Catalyzes the oxidation of 5,10-methylenetetrahydrofolate to 5,10-methenyltetrahydrofolate and then the hydrolysis of 5,10-methenyltetrahydrofolate to 10-formyltetrahydrofolate. This Clostridium perfringens (strain SM101 / Type A) protein is Bifunctional protein FolD.